The sequence spans 241 residues: Small ribosomal subunit protein uS3 (241 aa).

The 69-residue stretch at 39–107 (IREVLMKNLK…EVVINIVEVR (69 aa)) folds into the KH type-2 domain. A disordered region spans residues 219-241 (MAELDHAGGGGGGERRRRERDAA). Basic and acidic residues predominate over residues 231-241 (GERRRRERDAA).

It belongs to the universal ribosomal protein uS3 family. As to quaternary structure, part of the 30S ribosomal subunit. Forms a tight complex with proteins S10 and S14.

In terms of biological role, binds the lower part of the 30S subunit head. Binds mRNA in the 70S ribosome, positioning it for translation. The chain is Small ribosomal subunit protein uS3 from Beijerinckia indica subsp. indica (strain ATCC 9039 / DSM 1715 / NCIMB 8712).